The following is an 81-amino-acid chain: Short neurotoxin 1 (81 aa).

The first 21 residues, 1–21 (MKTLLLTLVVVTIVCLDLGYT), serve as a signal peptide directing secretion. 4 disulfide bridges follow: Cys-24-Cys-43, Cys-38-Cys-60, Cys-62-Cys-73, and Cys-74-Cys-79.

The protein belongs to the three-finger toxin family. Short-chain subfamily. Type I alpha-neurotoxin sub-subfamily. Expressed by the venom gland.

The protein localises to the secreted. In terms of biological role, binds to muscle nicotinic acetylcholine receptor (nAChR) and inhibit acetylcholine from binding to the receptor, thereby impairing neuromuscular transmission. This chain is Short neurotoxin 1, found in Cryptophis nigrescens (Eastern small-eyed snake).